Here is a 151-residue protein sequence, read N- to C-terminus: RNA polymerase-binding transcription factor DksA (151 aa).

Zn(2+) is bound by residues C114, C117, C135, and C138. The dksA C4-type zinc finger occupies 114–138 (CNSCAVEIGIRRLEARPTANLCIDC).

The protein belongs to the DksA family. In terms of assembly, interacts directly with the RNA polymerase.

The protein resides in the cytoplasm. Transcription factor that acts by binding directly to the RNA polymerase (RNAP). Required for negative regulation of rRNA expression and positive regulation of several amino acid biosynthesis promoters. Also required for regulation of fis expression. The polypeptide is RNA polymerase-binding transcription factor DksA (Buchnera aphidicola subsp. Schizaphis graminum (strain Sg)).